The chain runs to 437 residues: Methionine aminopeptidase 2 (437 aa).

A disordered region spans residues 1–90 (MAAQAAPAEE…LFPNNQYPKG (90 aa)). The segment covering 10–20 (ELSKLSVDETK) has biased composition (basic and acidic residues). The span at 31 to 42 (SDAESGDEEAEE) shows a compositional bias: acidic residues. Over residues 52-66 (AKKKKKRKPKKKKKA) the composition is skewed to basic residues. Residue H190 participates in substrate binding. Residues D210, D221, and H290 each coordinate a divalent metal cation. Substrate is bound at residue H298. E323 and E418 together coordinate a divalent metal cation.

Belongs to the peptidase M24A family. Methionine aminopeptidase eukaryotic type 2 subfamily. It depends on Co(2+) as a cofactor. Requires Zn(2+) as cofactor. The cofactor is Mn(2+). Fe(2+) serves as cofactor.

It localises to the cytoplasm. The enzyme catalyses Release of N-terminal amino acids, preferentially methionine, from peptides and arylamides.. Functionally, cotranslationally removes the N-terminal methionine from nascent proteins. The N-terminal methionine is often cleaved when the second residue in the primary sequence is small and uncharged (Met-Ala-, Cys, Gly, Pro, Ser, Thr, or Val). The sequence is that of Methionine aminopeptidase 2 from Neurospora crassa (strain ATCC 24698 / 74-OR23-1A / CBS 708.71 / DSM 1257 / FGSC 987).